A 592-amino-acid polypeptide reads, in one-letter code: Sodium- and chloride-dependent transporter XTRP3A (592 aa).

Residues 1–7 are Cytoplasmic-facing; that stretch reads MEKARPQ. The chain crosses the membrane as a helical span at residues 8 to 28; it reads WGHPLQFVFACISYAVGLGNV. Residues 29-42 lie on the Extracellular side of the membrane; it reads WRFPYLCQMYGGGS. Residues 43-63 form a helical membrane-spanning segment; it reads FLVPYIIMLIVEGMPLLYLEL. Residues 64–79 are Cytoplasmic-facing; the sequence is AVGQRMRQGSIGAWRT. Residues 80–100 traverse the membrane as a helical segment; sequence ISPYLSGVGVASVVVSFFLSM. Residues 101–165 are Extracellular-facing; sequence YYNVINAWGF…ISPSIQENGG (65 aa). A glycan (N-linked (GlcNAc...) asparagine) is linked at Asn131. The chain crosses the membrane as a helical span at residues 166-186; that stretch reads VQWEPALCLTLAWLMVYLCIL. The Cytoplasmic segment spans residues 187–194; the sequence is RGTESTGK. The helical transmembrane segment at 195 to 215 threads the bilayer; sequence VVYFTASMPYCVLIIYLVRGL. Topologically, residues 216–241 are extracellular; the sequence is TLHGATNGLMYMFTPKMEQLANPKAW. Residues 242-262 traverse the membrane as a helical segment; it reads INAATQIFFSLGLGFGSLIAF. The Cytoplasmic segment spans residues 263–276; sequence ASYNEPSNNCQKHA. The chain crosses the membrane as a helical span at residues 277-297; it reads IIVSIINSSTSIFASIVTFSI. Topologically, residues 298-389 are extracellular; sequence YGFKATFNYE…EAIKNMEVSQ (92 aa). Residues 390-410 traverse the membrane as a helical segment; the sequence is LWSVLYFFMLLMLGIGSMLGN. Residues 411 to 431 lie on the Cytoplasmic side of the membrane; the sequence is TAAILTPLTDSKVISSYLPKE. The chain crosses the membrane as a helical span at residues 432-452; that stretch reads AISGLVCLINCAVGMVFTMEA. At 453–465 the chain is on the extracellular side; sequence GNYWFDIFNDYAA. The helical transmembrane segment at 466 to 486 threads the bilayer; the sequence is TLSLLLIVLVETIAVCYVYGL. Over 487-504 the chain is Cytoplasmic; sequence KRFESDLRAMTGRTLSWY. Residues 505-525 traverse the membrane as a helical segment; sequence WKVMWAFVSPLLIVGLFIFYL. Residues 526–554 are Extracellular-facing; sequence SDYILTGTLQYQAWDATQGQLVTKDYPPH. A helical transmembrane segment spans residues 555–575; the sequence is ALAVIGLLVASSTMCIPLVAL. At 576-592 the chain is on the cytoplasmic side; sequence GTFIRNRLKRGGSAPVA.

The protein belongs to the sodium:neurotransmitter symporter (SNF) (TC 2.A.22) family. SLC6A20 subfamily. In terms of tissue distribution, expressed in brain, kidney, small intestine, thymus, spleen and lung. In the brain, expressed in cerebellum, cortex and brain stem. Not detected in liver, muscle or heart. In brain, widespread in various regions, including the meninges, choroid plexus, cortex, hippocampus and thalamus.

It localises to the apical cell membrane. It carries out the reaction L-proline(out) + chloride(out) + 2 Na(+)(out) = L-proline(in) + chloride(in) + 2 Na(+)(in). It catalyses the reaction 4-hydroxy-L-proline(out) + chloride(out) + 2 Na(+)(out) = 4-hydroxy-L-proline(in) + chloride(in) + 2 Na(+)(in). The enzyme catalyses 2-methyl-2-(methylamino)propanoate(out) + chloride(out) + 2 Na(+)(out) = 2-methyl-2-(methylamino)propanoate(in) + chloride(in) + 2 Na(+)(in). The catalysed reaction is L-pipecolate(out) + chloride(out) + 2 Na(+)(out) = L-pipecolate(in) + chloride(in) + 2 Na(+)(in). It carries out the reaction glycine betaine(out) + chloride(out) + 2 Na(+)(out) = glycine betaine(in) + chloride(in) + 2 Na(+)(in). It catalyses the reaction glycine(out) + chloride(out) + 2 Na(+)(out) = glycine(in) + chloride(in) + 2 Na(+)(in). Mediates the Na(+)- and Cl(-)-dependent uptake of imino acids such as L-proline, N-methyl-L-proline and pipecolate as well as N-methylated amino acids. Also transports glycine, regulates proline and glycine homeostasis in the brain playing a role in the modulation of NMDAR currents. The polypeptide is Sodium- and chloride-dependent transporter XTRP3A (Mus musculus (Mouse)).